The following is a 78-amino-acid chain: Large ribosomal subunit protein bL28 (78 aa).

Residues 1–20 (MSRVCQVTGKGPVTGNNISH) are disordered.

This sequence belongs to the bacterial ribosomal protein bL28 family.

This is Large ribosomal subunit protein bL28 from Pseudomonas fluorescens (strain ATCC BAA-477 / NRRL B-23932 / Pf-5).